We begin with the raw amino-acid sequence, 324 residues long: Methyltransferase pytC (324 aa).

It belongs to the methyltransferase superfamily. LaeA methyltransferase family.

It functions in the pathway secondary metabolite biosynthesis. In terms of biological role, methyltransferase; part of the gene cluster that mediates the biosynthesis of pyranterreones, a family of antioxidative compounds. The first step of pyranonigrins biosynthesis is performed by the hybrid PKS-NRPS synthetase pytA that condenses 4 malonyl-CoA units ato the acetyl starter unit by the modular PKS of pytA. The acyl chain is then connected to an L-serine through the amide bond by the modular NRPS of pytA. A tetramic acid is formed and released from the PKS-NRPS pytA to give pyranterreone 5 with the help of the thioesterase pytI. Pyranterreone 5 could be methylated by pytC to afford pyranterreone 6. Both pyranterreones 5 and 6 are subsequently oxidized by the FAD-linked oxidoreductase pytB and the cytochrome P450 monooxygenase pytD to form the fused gamma-pyrone core, resulting in pyranterreones 7 and 11, respectively. The hydroxy group at C-8 of pyranterreones 7 and 11 are dehydrated by the aspartyl protease pytH to form a delta-7 double bond to give pyranterreones 3 and 1, 2 accordingly. The exo-methylene of pyranterreone 3 could be reduced into a pendant methyl by reductase pytE to provide pyranterreone 4, also known as cordylactam. Pyranterreone 4 can be reconverted to pyranterreone 3 through pytB-catalyzed dehydrogenation or further oxidized to pyranterreones 9 and 10. The sequence is that of Methyltransferase pytC from Aspergillus terreus (strain NIH 2624 / FGSC A1156).